Reading from the N-terminus, the 338-residue chain is Ribosomal RNA small subunit methyltransferase H (338 aa).

S-adenosyl-L-methionine contacts are provided by residues 53–55, Asp72, Tyr99, Asp123, and Gln130; that span reads GGH. Disordered regions lie at residues 276–297 and 304–323; these read EITPRSKSKSPEGLPVELPGMG and TRGAERASEQEVEENPRSAP.

Belongs to the methyltransferase superfamily. RsmH family.

The protein resides in the cytoplasm. It carries out the reaction cytidine(1402) in 16S rRNA + S-adenosyl-L-methionine = N(4)-methylcytidine(1402) in 16S rRNA + S-adenosyl-L-homocysteine + H(+). Its function is as follows. Specifically methylates the N4 position of cytidine in position 1402 (C1402) of 16S rRNA. In Rhodococcus jostii (strain RHA1), this protein is Ribosomal RNA small subunit methyltransferase H.